Here is a 283-residue protein sequence, read N- to C-terminus: Bifunctional protein FolD (283 aa).

NADP(+)-binding positions include 166-168 and Ser191; that span reads GRS.

Belongs to the tetrahydrofolate dehydrogenase/cyclohydrolase family. In terms of assembly, homodimer.

The catalysed reaction is (6R)-5,10-methylene-5,6,7,8-tetrahydrofolate + NADP(+) = (6R)-5,10-methenyltetrahydrofolate + NADPH. The enzyme catalyses (6R)-5,10-methenyltetrahydrofolate + H2O = (6R)-10-formyltetrahydrofolate + H(+). The protein operates within one-carbon metabolism; tetrahydrofolate interconversion. Its function is as follows. Catalyzes the oxidation of 5,10-methylenetetrahydrofolate to 5,10-methenyltetrahydrofolate and then the hydrolysis of 5,10-methenyltetrahydrofolate to 10-formyltetrahydrofolate. The chain is Bifunctional protein FolD from Pediococcus pentosaceus (strain ATCC 25745 / CCUG 21536 / LMG 10740 / 183-1w).